We begin with the raw amino-acid sequence, 243 residues long: Orotidine 5'-phosphate decarboxylase (243 aa).

Residues D12, K34, 61-70, T125, R187, Q196, G216, and R217 each bind substrate; that span reads DLKFHDIPNT. The active-site Proton donor is the K63.

It belongs to the OMP decarboxylase family. Type 1 subfamily. In terms of assembly, homodimer.

The catalysed reaction is orotidine 5'-phosphate + H(+) = UMP + CO2. The protein operates within pyrimidine metabolism; UMP biosynthesis via de novo pathway; UMP from orotate: step 2/2. Its function is as follows. Catalyzes the decarboxylation of orotidine 5'-monophosphate (OMP) to uridine 5'-monophosphate (UMP). The chain is Orotidine 5'-phosphate decarboxylase from Heliobacterium modesticaldum (strain ATCC 51547 / Ice1).